The chain runs to 64 residues: Large ribosomal subunit protein bL35 (64 aa).

The protein belongs to the bacterial ribosomal protein bL35 family.

The polypeptide is Large ribosomal subunit protein bL35 (Wolinella succinogenes (strain ATCC 29543 / DSM 1740 / CCUG 13145 / JCM 31913 / LMG 7466 / NCTC 11488 / FDC 602W) (Vibrio succinogenes)).